Consider the following 453-residue polypeptide: 3-phosphoshikimate 1-carboxyvinyltransferase (453 aa).

The disordered stretch occupies residues 1–27 (MSHDSEPQPVTATPGGPLNGSLKPPGD). 3-phosphoshikimate is bound by residues Lys-28, Ser-29, and Arg-33. Lys-28 lines the phosphoenolpyruvate pocket. Gly-101 and Arg-129 together coordinate phosphoenolpyruvate. Positions 175, 177, 330, and 357 each coordinate 3-phosphoshikimate. Gln-177 serves as a coordination point for phosphoenolpyruvate. Residue Asp-330 is the Proton acceptor of the active site. Phosphoenolpyruvate-binding residues include Arg-361 and Arg-405.

This sequence belongs to the EPSP synthase family. Monomer.

The protein localises to the cytoplasm. It carries out the reaction 3-phosphoshikimate + phosphoenolpyruvate = 5-O-(1-carboxyvinyl)-3-phosphoshikimate + phosphate. It participates in metabolic intermediate biosynthesis; chorismate biosynthesis; chorismate from D-erythrose 4-phosphate and phosphoenolpyruvate: step 6/7. In terms of biological role, catalyzes the transfer of the enolpyruvyl moiety of phosphoenolpyruvate (PEP) to the 5-hydroxyl of shikimate-3-phosphate (S3P) to produce enolpyruvyl shikimate-3-phosphate and inorganic phosphate. The sequence is that of 3-phosphoshikimate 1-carboxyvinyltransferase from Methylorubrum extorquens (strain CM4 / NCIMB 13688) (Methylobacterium extorquens).